A 345-amino-acid polypeptide reads, in one-letter code: Phosphate acyltransferase (345 aa).

This sequence belongs to the PlsX family. As to quaternary structure, homodimer. Probably interacts with PlsY.

The protein resides in the cytoplasm. It catalyses the reaction a fatty acyl-[ACP] + phosphate = an acyl phosphate + holo-[ACP]. Its pathway is lipid metabolism; phospholipid metabolism. In terms of biological role, catalyzes the reversible formation of acyl-phosphate (acyl-PO(4)) from acyl-[acyl-carrier-protein] (acyl-ACP). This enzyme utilizes acyl-ACP as fatty acyl donor, but not acyl-CoA. The sequence is that of Phosphate acyltransferase from Anaplasma phagocytophilum (strain HZ).